We begin with the raw amino-acid sequence, 277 residues long: Cell death abnormality protein 2 (277 aa).

One can recognise an SH2 domain in the interval 14-112; it reads FYFPGMSRED…EASLLSAYKK (99 aa). Positions 113-173 constitute an SH3 1 domain; it reads PIIEVVVGTF…PANYVQVQSG (61 aa). The disordered stretch occupies residues 179–217; the sequence is RISKGTSQSSIGSSGNGAERFSSTSTSSENAEAHPTLPT. Low complexity predominate over residues 182–206; that stretch reads KGTSQSSIGSSGNGAERFSSTSTSS. Residues 214-275 form the SH3 2 domain; the sequence is TLPTTAKVTF…PFTYIRFNTA (62 aa).

This sequence belongs to the CRK family. Interacts with ced-5 (via C-terminus which contains a candidate SH3-binding, proline-rich region). Forms a ternary complex with ced-5 and ced-12. Interacts (via SH-2 domain) with src-1 (when activated and phosphorylated at 'Tyr-416').

Its function is as follows. Required for cell migration and engulfment of cell corpses but not for programmed cell death/apoptosis. Also has a role in the migration of the 2 gonadal distal tip cells (DTCs). The sequence is that of Cell death abnormality protein 2 from Caenorhabditis briggsae.